Reading from the N-terminus, the 182-residue chain is Heat shock protein beta-2 (182 aa).

A sHSP domain is found at 55–163 (PAGEGSRAGA…DTEVNEVYIS (109 aa)).

The protein belongs to the small heat shock protein (HSP20) family. In terms of assembly, interacts with DMPK; may enhance its kinase activity. Expressed preferentially in skeletal muscle and heart but not in the lens.

Its subcellular location is the cytoplasm. The protein localises to the nucleus. In terms of biological role, may regulate the kinase DMPK. In Homo sapiens (Human), this protein is Heat shock protein beta-2 (HSPB2).